The chain runs to 202 residues: Endothelin-1 (202 aa).

The first 25 residues, 1–25 (MDYFPMIFALLFVAFQGAPEAAVLG), serve as a signal peptide directing secretion. Residues 26 to 50 (TELSAGAEDGGEKPAPATPWRPRRS) constitute a propeptide that is removed on maturation. Cystine bridges form between Cys-53–Cys-67 and Cys-55–Cys-63. Residues 74 to 202 (VNTPEHVVPY…DKKVIYNRAH (129 aa)) constitute a propeptide that is removed on maturation. The interval 110 to 124 (CQCASQTDKKCWNFC) is endothelin-like.

Belongs to the endothelin/sarafotoxin family.

It localises to the secreted. In terms of biological role, endothelins are endothelium-derived vasoconstrictor peptides. Probable ligand for G-protein coupled receptors EDNRA and EDNRB which activates PTK2B, BCAR1, BCAR3 and, GTPases RAP1 and RHOA cascade in glomerular mesangial cells. Also binds the DEAR/FBXW7-AS1 receptor. Promotes mesenteric arterial wall remodeling via activation of ROCK signaling and subsequent colocalization of NFATC3 with F-actin filaments. NFATC3 then translocates to the nucleus where it subsequently promotes the transcription of the smooth muscle hypertrophy and differentiation marker ACTA2. The polypeptide is Endothelin-1 (EDN1) (Bos taurus (Bovine)).